A 166-amino-acid chain; its full sequence is Olee1-like protein (166 aa).

Residues 1 to 23 (MAKSIIIQAPALCFLSLLGFAYS) form the signal peptide. 3 disulfide bridges follow: Cys35–Cys106, Cys38–Cys150, and Cys59–Cys94.

The protein belongs to the Ole e I family.

It localises to the secreted. The protein is Olee1-like protein of Betula pendula (European white birch).